We begin with the raw amino-acid sequence, 319 residues long: Ribonuclease Z (319 aa).

7 residues coordinate Zn(2+): histidine 62, histidine 64, aspartate 66, histidine 67, histidine 145, aspartate 215, and histidine 273. Aspartate 66 serves as the catalytic Proton acceptor.

It belongs to the RNase Z family. As to quaternary structure, homodimer. The cofactor is Zn(2+).

It catalyses the reaction Endonucleolytic cleavage of RNA, removing extra 3' nucleotides from tRNA precursor, generating 3' termini of tRNAs. A 3'-hydroxy group is left at the tRNA terminus and a 5'-phosphoryl group is left at the trailer molecule.. In terms of biological role, zinc phosphodiesterase, which displays some tRNA 3'-processing endonuclease activity. Probably involved in tRNA maturation, by removing a 3'-trailer from precursor tRNA. In Borrelia hermsii (strain HS1 / DAH), this protein is Ribonuclease Z.